A 544-amino-acid polypeptide reads, in one-letter code: Cytochrome P450 82A1 (544 aa).

Cys481 provides a ligand contact to heme.

This sequence belongs to the cytochrome P450 family. Heme serves as cofactor.

It localises to the membrane. The protein is Cytochrome P450 82A1 (CYP82A1) of Pisum sativum (Garden pea).